Consider the following 415-residue polypeptide: L-cysteine:1D-myo-inositol 2-amino-2-deoxy-alpha-D-glucopyranoside ligase (415 aa).

Residue Cys-43 participates in Zn(2+) binding. L-cysteinyl-5'-AMP is bound by residues 43 to 46 (CGIT), Thr-58, and 81 to 83 (NVT). A 'HIGH' region motif is present at residues 45–55 (ITPYDATHLGH). A 'ERGGDP' region motif is present at residues 188-193 (ERGGDP). Trp-229 serves as a coordination point for L-cysteinyl-5'-AMP. Zn(2+) is bound at residue Cys-233. Residue 251-253 (GSD) participates in L-cysteinyl-5'-AMP binding. His-258 is a binding site for Zn(2+). Val-285 provides a ligand contact to L-cysteinyl-5'-AMP. Residues 291-295 (KMSKS) carry the 'KMSKS' region motif.

This sequence belongs to the class-I aminoacyl-tRNA synthetase family. MshC subfamily. Monomer. The cofactor is Zn(2+).

The catalysed reaction is 1D-myo-inositol 2-amino-2-deoxy-alpha-D-glucopyranoside + L-cysteine + ATP = 1D-myo-inositol 2-(L-cysteinylamino)-2-deoxy-alpha-D-glucopyranoside + AMP + diphosphate + H(+). Catalyzes the ATP-dependent condensation of GlcN-Ins and L-cysteine to form L-Cys-GlcN-Ins. The polypeptide is L-cysteine:1D-myo-inositol 2-amino-2-deoxy-alpha-D-glucopyranoside ligase (Cellulomonas flavigena (strain ATCC 482 / DSM 20109 / BCRC 11376 / JCM 18109 / NBRC 3775 / NCIMB 8073 / NRS 134)).